The sequence spans 144 residues: Ribosome-binding factor A (144 aa).

2 disordered regions span residues 1–22 (MPRH…QLRV) and 125–144 (TPAV…EEEQ). Residues 134–144 (QDPDSDREEEQ) are compositionally biased toward acidic residues.

The protein belongs to the RbfA family. As to quaternary structure, monomer. Binds 30S ribosomal subunits, but not 50S ribosomal subunits or 70S ribosomes.

It localises to the cytoplasm. Functionally, one of several proteins that assist in the late maturation steps of the functional core of the 30S ribosomal subunit. Associates with free 30S ribosomal subunits (but not with 30S subunits that are part of 70S ribosomes or polysomes). Required for efficient processing of 16S rRNA. May interact with the 5'-terminal helix region of 16S rRNA. This is Ribosome-binding factor A from Bradyrhizobium diazoefficiens (strain JCM 10833 / BCRC 13528 / IAM 13628 / NBRC 14792 / USDA 110).